The chain runs to 462 residues: Argininosuccinate lyase (462 aa).

The protein belongs to the lyase 1 family. Argininosuccinate lyase subfamily.

It is found in the cytoplasm. It catalyses the reaction 2-(N(omega)-L-arginino)succinate = fumarate + L-arginine. Its pathway is amino-acid biosynthesis; L-arginine biosynthesis; L-arginine from L-ornithine and carbamoyl phosphate: step 3/3. This chain is Argininosuccinate lyase, found in Exiguobacterium sp. (strain ATCC BAA-1283 / AT1b).